The chain runs to 318 residues: Peroxisomal and mitochondrial division factor 1 (318 aa).

The tract at residues 1-39 is disordered; it reads MADVEDRAAKGISDYDQGGVKTTELERKIEDMENKNQEL. The Cytoplasmic segment spans residues 1–291; sequence MADVEDRAAK…QKGSLEAEYQ (291 aa). Residues 19–260 adopt a coiled-coil conformation; the sequence is GVKTTELERK…KKVEEGNKTV (242 aa). Positions 23-39 are enriched in basic and acidic residues; sequence TELERKIEDMENKNQEL. Residues 292–312 traverse the membrane as a helical segment; sequence WPVVAAGSVGAAGLVAATFFV. Over 313 to 318 the chain is Mitochondrial intermembrane; that stretch reads CYSKLR.

In terms of assembly, homodimer. Interacts with PMD2.

The protein localises to the peroxisome membrane. The protein resides in the mitochondrion outer membrane. In terms of biological role, involved in morphogenesis and proliferation of peroxisomes and mitochondria, independently from the previously defined pathway controlled by the FIS1-DRP3 complex. In Arabidopsis thaliana (Mouse-ear cress), this protein is Peroxisomal and mitochondrial division factor 1.